A 185-amino-acid chain; its full sequence is Threonylcarbamoyl-AMP synthase (185 aa).

In terms of domain architecture, YrdC-like spans 4 to 185; it reads SWRVQQAARE…LATGNIVRPA (182 aa).

Belongs to the SUA5 family. TsaC subfamily.

It localises to the cytoplasm. It catalyses the reaction L-threonine + hydrogencarbonate + ATP = L-threonylcarbamoyladenylate + diphosphate + H2O. In terms of biological role, required for the formation of a threonylcarbamoyl group on adenosine at position 37 (t(6)A37) in tRNAs that read codons beginning with adenine. Catalyzes the conversion of L-threonine, HCO(3)(-)/CO(2) and ATP to give threonylcarbamoyl-AMP (TC-AMP) as the acyladenylate intermediate, with the release of diphosphate. The protein is Threonylcarbamoyl-AMP synthase of Pseudomonas fluorescens (strain Pf0-1).